The primary structure comprises 157 residues: Crossover junction endodeoxyribonuclease RuvC (157 aa).

Catalysis depends on residues D7, E66, and D139. Residues D7, E66, and D139 each coordinate Mg(2+).

It belongs to the RuvC family. In terms of assembly, homodimer which binds Holliday junction (HJ) DNA. The HJ becomes 2-fold symmetrical on binding to RuvC with unstacked arms; it has a different conformation from HJ DNA in complex with RuvA. In the full resolvosome a probable DNA-RuvA(4)-RuvB(12)-RuvC(2) complex forms which resolves the HJ. Mg(2+) is required as a cofactor.

The protein localises to the cytoplasm. It carries out the reaction Endonucleolytic cleavage at a junction such as a reciprocal single-stranded crossover between two homologous DNA duplexes (Holliday junction).. Its function is as follows. The RuvA-RuvB-RuvC complex processes Holliday junction (HJ) DNA during genetic recombination and DNA repair. Endonuclease that resolves HJ intermediates. Cleaves cruciform DNA by making single-stranded nicks across the HJ at symmetrical positions within the homologous arms, yielding a 5'-phosphate and a 3'-hydroxyl group; requires a central core of homology in the junction. The consensus cleavage sequence is 5'-(A/T)TT(C/G)-3'. Cleavage occurs on the 3'-side of the TT dinucleotide at the point of strand exchange. HJ branch migration catalyzed by RuvA-RuvB allows RuvC to scan DNA until it finds its consensus sequence, where it cleaves and resolves the cruciform DNA. The protein is Crossover junction endodeoxyribonuclease RuvC of Helicobacter pylori (strain J99 / ATCC 700824) (Campylobacter pylori J99).